We begin with the raw amino-acid sequence, 356 residues long: Alpha-N-acetylneuraminide alpha-2,8-sialyltransferase (356 aa).

Residues 1-29 are Cytoplasmic-facing; that stretch reads MSPCGRARRQTSRGAMAVLAWKFPRTRLP. Residues 30–48 traverse the membrane as a helical; Signal-anchor for type II membrane protein segment; that stretch reads MGASALCVVVLCWLYIFPV. The Lumenal segment spans residues 49–356; that stretch reads YRLPNEKEIV…CEDTSLQPTS (308 aa). Residues N71 and N119 are each glycosylated (N-linked (GlcNAc...) asparagine). 2 cysteine pairs are disulfide-bonded: C138/C287 and C152/C347. Residues N143 and N166 each contribute to the CMP-N-acetyl-beta-neuraminate site. 2 N-linked (GlcNAc...) asparagine glycosylation sites follow: N214 and N245. CMP-N-acetyl-beta-neuraminate contacts are provided by S274, T275, G276, W296, and H310. H322 (proton donor/acceptor) is an active-site residue.

This sequence belongs to the glycosyltransferase 29 family.

Its subcellular location is the golgi apparatus membrane. The enzyme catalyses an N-acetyl-alpha-neuraminyl-(2-&gt;3)-beta-D-galactosyl derivative + CMP-N-acetyl-beta-neuraminate = an N-acetyl-alpha-neuraminyl-(2-&gt;8)-N-acetyl-alpha-neuraminyl-(2-&gt;3)-beta-D-galactosyl derivative + CMP + H(+). It catalyses the reaction a ganglioside GM3 (d18:1(4E)) + CMP-N-acetyl-beta-neuraminate = a ganglioside GD3 (d18:1(4E)) + CMP + H(+). It carries out the reaction a ganglioside GD3 (d18:1(4E)) + CMP-N-acetyl-beta-neuraminate = a ganglioside GT3 (d18:1(4E)) + CMP + H(+). The catalysed reaction is a ganglioside GD1a (d18:1(4E)) + CMP-N-acetyl-beta-neuraminate = a ganglioside GT1a (d18:1(4E)) + CMP + H(+). The enzyme catalyses a ganglioside GT1b (d18:1(4E)) + CMP-N-acetyl-beta-neuraminate = a ganglioside GQ1b (d18:1(4E)) + CMP + H(+). It catalyses the reaction a ganglioside GM1b (d18:1(4E)) + CMP-N-acetyl-beta-neuraminate = a ganglioside GD1c (d18:1(4E)) + CMP + H(+). It carries out the reaction a ganglioside GD3 + CMP-N-acetyl-beta-neuraminate = a ganglioside GT3 + CMP + H(+). The catalysed reaction is [alpha-N-acetylneuraminyl-(2-&gt;8)](n)-alpha-N-acetylneuraminyl-(2-&gt;8)-alpha-N-acetylneuraminyl-(2-&gt;3)-beta-D-galactosyl-(1-&gt;4)-beta-D-glucosyl-(1&lt;-&gt;1)-ceramide + CMP-N-acetyl-beta-neuraminate = [alpha-N-acetylneuraminyl-(2-&gt;8)](n+1)-alpha-N-acetylneuraminyl-(2-&gt;8)-alpha-N-acetylneuraminyl-(2-&gt;3)-beta-D-galactosyl-(1-&gt;4)-beta-D-glucosyl-(1&lt;-&gt;1)-ceramide + CMP + H(+). It participates in protein modification; protein glycosylation. Its pathway is lipid metabolism; sphingolipid metabolism. In terms of biological role, catalyzes the addition of sialic acid in alpha 2,8-linkage to the sialic acid moiety of the ganglioside GM3 to form ganglioside GD3; gangliosides are a subfamily of complex glycosphingolipds that contain one or more residues of sialic acid. Can catalyze the addition of a second alpha-2,8- sialic acid to GD3 to form GT3. Can use GM1b, GD1a and GT1b as acceptor substrates to synthesize GD1c, GT1a and GQ1b respectively. In Pan troglodytes (Chimpanzee), this protein is Alpha-N-acetylneuraminide alpha-2,8-sialyltransferase.